We begin with the raw amino-acid sequence, 563 residues long: Kelch repeat and BTB domain-containing protein 1 (563 aa).

In terms of domain architecture, BTB spans 21-88 (CDINIVINDE…IYGIPLSLTN (68 aa)). The BACK domain maps to 123-219 (CIDFYIYADK…SLLSPQVIKS (97 aa)). Kelch repeat units follow at residues 252-297 (IELI…VLDN), 298-346 (IIYM…ADDE), 347-395 (YIYC…MLNG), 397-441 (IYVI…VHAG), 442-492 (KIYI…SAHN), and 494-538 (LYVG…CEPI).

As to quaternary structure, interacts (via BTB domain) with host CUL3.

It is found in the host cytoplasm. Its function is as follows. Probable substrate-specific adapter of CUL3-containing E3 ubiquitin-protein ligases which mediate the ubiquitination and subsequent proteasomal degradation of host target proteins. The sequence is that of Kelch repeat and BTB domain-containing protein 1 (KBTB1) from Cowpox virus (strain Brighton Red) (CPV).